Consider the following 172-residue polypeptide: Large ribosomal subunit protein uL10 (172 aa).

The protein belongs to the universal ribosomal protein uL10 family. In terms of assembly, part of the ribosomal stalk of the 50S ribosomal subunit. The N-terminus interacts with L11 and the large rRNA to form the base of the stalk. The C-terminus forms an elongated spine to which L12 dimers bind in a sequential fashion forming a multimeric L10(L12)X complex.

Forms part of the ribosomal stalk, playing a central role in the interaction of the ribosome with GTP-bound translation factors. This Chlorobium phaeovibrioides (strain DSM 265 / 1930) (Prosthecochloris vibrioformis (strain DSM 265)) protein is Large ribosomal subunit protein uL10.